Here is a 555-residue protein sequence, read N- to C-terminus: Luciferin 2-monooxygenase (555 aa).

The signal sequence occupies residues 1–11 (MKIIILSVILA). VWFD domains lie at 80-266 (IECR…EYCK) and 319-494 (GTCV…RLCN). 4 cysteine pairs are disulfide-bonded: cysteine 82–cysteine 222, cysteine 321–cysteine 454, cysteine 343–cysteine 493, and cysteine 352–cysteine 451. 2 N-linked (GlcNAc...) asparagine glycosylation sites follow: asparagine 186 and asparagine 408.

Post-translationally, the cysteine residues presumably exist in intramolecular disulfide bridges. In terms of processing, the N-terminus is blocked.

The catalysed reaction is Cypridina luciferin + O2 = oxidized Cypridina luciferin + hnu + CO2. In Vargula hilgendorfii (Sea firefly), this protein is Luciferin 2-monooxygenase.